The sequence spans 223 residues: Transcriptional regulatory protein PhoP (223 aa).

The region spanning 2–116 (RVLVVEDNAL…EVMARMQALM (115 aa)) is the Response regulatory domain. The residue at position 51 (Asp51) is a 4-aspartylphosphate. Positions 124-222 (SQVISLPPFQ…VRGQGYLFEL (99 aa)) form a DNA-binding region, ompR/PhoB-type.

Monomer in the inactive, unphosphorylated state and dimer in the active, phosphorylated state. Phosphorylated by PhoQ.

The protein localises to the cytoplasm. With respect to regulation, feedback inhibited by MgrB, which seems to bind PhoQ, altering its activity and that of downstream effector PhoP. PhoP-regulated transcription is redox-sensitive, being activated when the periplasm becomes more reducing (deletion of dsbA/dsbB, or treatment with dithiothreitol). MgrB acts between DsbA/DsbB and PhoP/PhoQ in this pathway. Member of the two-component regulatory system PhoP/PhoQ involved in adaptation to low Mg(2+) environments and the control of acid resistance genes. In low periplasmic Mg(2+), PhoQ phosphorylates PhoP, resulting in the expression of PhoP-activated genes (PAG) and repression of PhoP-repressed genes (PRG). In high periplasmic Mg(2+), PhoQ dephosphorylates phospho-PhoP, resulting in the repression of PAG and may lead to expression of some PRG. Mediates magnesium influx to the cytosol by activation of MgtA. Promotes expression of the two-component regulatory system rstA/rstB and transcription of the hemL, mgrB, nagA, slyB, vboR and yrbL genes. This Escherichia coli (strain K12) protein is Transcriptional regulatory protein PhoP (phoP).